A 119-amino-acid polypeptide reads, in one-letter code: Large ribosomal subunit protein bL20c (119 aa).

The protein belongs to the bacterial ribosomal protein bL20 family.

It localises to the plastid. The protein resides in the chloroplast. Binds directly to 23S ribosomal RNA and is necessary for the in vitro assembly process of the 50S ribosomal subunit. It is not involved in the protein synthesizing functions of that subunit. This chain is Large ribosomal subunit protein bL20c, found in Saccharum officinarum (Sugarcane).